The sequence spans 248 residues: tRNA1(Val) (adenine(37)-N6)-methyltransferase (248 aa).

It belongs to the methyltransferase superfamily. tRNA (adenine-N(6)-)-methyltransferase family.

The protein resides in the cytoplasm. It carries out the reaction adenosine(37) in tRNA1(Val) + S-adenosyl-L-methionine = N(6)-methyladenosine(37) in tRNA1(Val) + S-adenosyl-L-homocysteine + H(+). In terms of biological role, specifically methylates the adenine in position 37 of tRNA(1)(Val) (anticodon cmo5UAC). This Musicola paradisiaca (strain Ech703) (Dickeya paradisiaca) protein is tRNA1(Val) (adenine(37)-N6)-methyltransferase.